Consider the following 155-residue polypeptide: Small ribosomal subunit protein uS10m (155 aa).

It belongs to the universal ribosomal protein uS10 family. Component of the mitochondrial ribosome small subunit (28S) which comprises a 12S rRNA and about 30 distinct proteins.

The protein resides in the mitochondrion. The protein is Small ribosomal subunit protein uS10m (Mrps10) of Rattus norvegicus (Rat).